The sequence spans 258 residues: Acetylglutamate kinase (258 aa).

Substrate contacts are provided by residues 44–45, Arg-66, and Asn-158; that span reads GG. ATP-binding positions include 181–186 and 209–211; these read DVSGIL and IIT.

The protein belongs to the acetylglutamate kinase family. ArgB subfamily. In terms of assembly, homodimer.

It localises to the cytoplasm. It carries out the reaction N-acetyl-L-glutamate + ATP = N-acetyl-L-glutamyl 5-phosphate + ADP. The protein operates within amino-acid biosynthesis; L-arginine biosynthesis; N(2)-acetyl-L-ornithine from L-glutamate: step 2/4. Its function is as follows. Catalyzes the ATP-dependent phosphorylation of N-acetyl-L-glutamate. The polypeptide is Acetylglutamate kinase (Shigella sonnei (strain Ss046)).